A 464-amino-acid polypeptide reads, in one-letter code: Endo-1,4-beta-xylanase A (464 aa).

The signal sequence occupies residues 1 to 33 (MFRHHPTRGRRTAGLLAAALATLSAGLTAVAPA). In terms of domain architecture, GH10 spans 40 to 349 (TATLGELAEA…KPAYHAIAAA (310 aa)). Residue glutamate 166 is the Proton donor of the active site. Glutamate 271 (nucleophile) is an active-site residue. The 104-residue stretch at 354-457 (SPAPGGNCTA…TPADVTCTPG (104 aa)) folds into the CBM2 domain.

The protein belongs to the glycosyl hydrolase 10 (cellulase F) family. The cofactor is Does not require any standard metal (Mg(2+), Mn2(+), Ca(2+))..

It catalyses the reaction Endohydrolysis of (1-&gt;4)-beta-D-xylosidic linkages in xylans.. It participates in glycan degradation; xylan degradation. Its activity is regulated as follows. Completely inhibited by Hg(2+), unaffected by EDTA. In terms of biological role, contributes to hydrolysis of hemicellulose, the major component of plant cell-walls. Hydrolyzes xylan to xylose and xylobiose. This Streptomyces sp protein is Endo-1,4-beta-xylanase A (xynAS9).